A 156-amino-acid polypeptide reads, in one-letter code: Small ribosomal subunit protein uS7 (156 aa).

It belongs to the universal ribosomal protein uS7 family. In terms of assembly, part of the 30S ribosomal subunit. Contacts proteins S9 and S11.

Its function is as follows. One of the primary rRNA binding proteins, it binds directly to 16S rRNA where it nucleates assembly of the head domain of the 30S subunit. Is located at the subunit interface close to the decoding center, probably blocks exit of the E-site tRNA. The polypeptide is Small ribosomal subunit protein uS7 (Thermomicrobium roseum (strain ATCC 27502 / DSM 5159 / P-2)).